The following is a 290-amino-acid chain: 4-diphosphocytidyl-2-C-methyl-D-erythritol kinase (290 aa).

Lys13 is an active-site residue. ATP is bound at residue 96–106 (PMGGGIGGGSS). Asp138 is a catalytic residue.

Belongs to the GHMP kinase family. IspE subfamily.

The catalysed reaction is 4-CDP-2-C-methyl-D-erythritol + ATP = 4-CDP-2-C-methyl-D-erythritol 2-phosphate + ADP + H(+). It participates in isoprenoid biosynthesis; isopentenyl diphosphate biosynthesis via DXP pathway; isopentenyl diphosphate from 1-deoxy-D-xylulose 5-phosphate: step 3/6. Functionally, catalyzes the phosphorylation of the position 2 hydroxy group of 4-diphosphocytidyl-2C-methyl-D-erythritol. The chain is 4-diphosphocytidyl-2-C-methyl-D-erythritol kinase from Vibrio cholerae serotype O1 (strain ATCC 39541 / Classical Ogawa 395 / O395).